The chain runs to 426 residues: C4-dicarboxylate transport protein (426 aa).

8 consecutive transmembrane segments (helical) span residues 8–28 (VLYV…HFYP), 44–64 (LIKM…IAGM), 78–98 (LLYF…ATHL), 148–168 (GEIL…AHVG), 184–204 (ILFG…FGAM), 222–242 (LIGT…GFIA), 297–317 (GYSF…LFIA), and 355–375 (AATL…ILGI).

This sequence belongs to the dicarboxylate/amino acid:cation symporter (DAACS) (TC 2.A.23) family.

The protein resides in the cell inner membrane. In terms of biological role, responsible for the transport of dicarboxylates such as succinate, fumarate, and malate from the periplasm across the membrane. This is C4-dicarboxylate transport protein from Paraburkholderia phymatum (strain DSM 17167 / CIP 108236 / LMG 21445 / STM815) (Burkholderia phymatum).